The sequence spans 543 residues: Cytochrome P450 1B1 (543 aa).

Cysteine 470 contacts heme.

It belongs to the cytochrome P450 family. Requires heme as cofactor.

The protein localises to the endoplasmic reticulum membrane. Its subcellular location is the microsome membrane. It localises to the mitochondrion. It catalyses the reaction an organic molecule + reduced [NADPH--hemoprotein reductase] + O2 = an alcohol + oxidized [NADPH--hemoprotein reductase] + H2O + H(+). It carries out the reaction 17beta-estradiol + reduced [NADPH--hemoprotein reductase] + O2 = 2-hydroxy-17beta-estradiol + oxidized [NADPH--hemoprotein reductase] + H2O + H(+). The catalysed reaction is 17beta-estradiol + reduced [NADPH--hemoprotein reductase] + O2 = 4-hydroxy-17beta-estradiol + oxidized [NADPH--hemoprotein reductase] + H2O + H(+). The enzyme catalyses estrone + reduced [NADPH--hemoprotein reductase] + O2 = 2-hydroxyestrone + oxidized [NADPH--hemoprotein reductase] + H2O + H(+). It catalyses the reaction estrone + reduced [NADPH--hemoprotein reductase] + O2 = 4-hydroxyestrone + oxidized [NADPH--hemoprotein reductase] + H2O + H(+). It carries out the reaction testosterone + reduced [NADPH--hemoprotein reductase] + O2 = 6beta,17beta-dihydroxyandrost-4-en-3-one + oxidized [NADPH--hemoprotein reductase] + H2O + H(+). The catalysed reaction is progesterone + reduced [NADPH--hemoprotein reductase] + O2 = 6beta-hydroxyprogesterone + oxidized [NADPH--hemoprotein reductase] + H2O + H(+). The enzyme catalyses progesterone + reduced [NADPH--hemoprotein reductase] + O2 = 16alpha-hydroxyprogesterone + oxidized [NADPH--hemoprotein reductase] + H2O + H(+). It catalyses the reaction all-trans-retinol + reduced [NADPH--hemoprotein reductase] + O2 = all-trans-retinal + oxidized [NADPH--hemoprotein reductase] + 2 H2O + H(+). It carries out the reaction all-trans-retinal + reduced [NADPH--hemoprotein reductase] + O2 = all-trans-retinoate + oxidized [NADPH--hemoprotein reductase] + H2O + 2 H(+). The catalysed reaction is (5Z,8Z,11Z,14Z)-eicosatetraenoate + reduced [NADPH--hemoprotein reductase] + O2 = (8R,9S)-epoxy-(5Z,11Z,14Z)-eicosatrienoate + oxidized [NADPH--hemoprotein reductase] + H2O + H(+). The enzyme catalyses (5Z,8Z,11Z,14Z)-eicosatetraenoate + reduced [NADPH--hemoprotein reductase] + O2 = (11R,12S)-epoxy-(5Z,8Z,14Z)-eicosatrienoate + oxidized [NADPH--hemoprotein reductase] + H2O + H(+). It catalyses the reaction (5Z,8Z,11Z,14Z)-eicosatetraenoate + reduced [NADPH--hemoprotein reductase] + O2 = (11S,12R)-epoxy-(5Z,8Z,14Z)-eicosatrienoate + oxidized [NADPH--hemoprotein reductase] + H2O + H(+). It carries out the reaction (5Z,8Z,11Z,14Z)-eicosatetraenoate + reduced [NADPH--hemoprotein reductase] + O2 = (14S,15R)-epoxy-(5Z,8Z,11Z)-eicosatrienoate + oxidized [NADPH--hemoprotein reductase] + H2O + H(+). The catalysed reaction is (5Z,8Z,11Z,14Z)-eicosatetraenoate + reduced [NADPH--hemoprotein reductase] + O2 = (14R,15S)-epoxy-(5Z,8Z,11Z)-eicosatrienoate + oxidized [NADPH--hemoprotein reductase] + H2O + H(+). The enzyme catalyses (5S)-hydroperoxy-(6E,8Z,11Z,14Z)-eicosatetraenoate = 5-oxo-(6E,8Z,11Z,14Z)-eicosatetraenoate + H2O. It catalyses the reaction (12S)-hydroperoxy-(5Z,8Z,10E,14Z)-eicosatetraenoate = 12-oxo-(5Z,8Z,10E,14Z)-eicosatetraenoate + H2O. It carries out the reaction (15S)-hydroperoxy-(5Z,8Z,11Z,13E)-eicosatetraenoate = 15-oxo-(5Z,8Z,11Z,13E)-eicosatetraenoate + H2O. The catalysed reaction is (13S)-hydroperoxy-(9Z,11E)-octadecadienoate = 13-oxo-(9Z,11E)-octadecadienoate + H2O. Its pathway is steroid hormone biosynthesis. It participates in cofactor metabolism; retinol metabolism. It functions in the pathway lipid metabolism; arachidonate metabolism. Its activity is regulated as follows. Enzyme activity is increased by cytochrome b5. Enzyme activity is increased by liposomes containing anionic phospholipids, phosphatidic acid and cardiolipin. Inhibited by naringenin with an IC(50) of 5 uM. Functionally, a cytochrome P450 monooxygenase involved in the metabolism of various endogenous substrates, including fatty acids, steroid hormones and vitamins. Mechanistically, uses molecular oxygen inserting one oxygen atom into a substrate, and reducing the second into a water molecule, with two electrons provided by NADPH via cytochrome P450 reductase (NADPH--hemoprotein reductase). Exhibits catalytic activity for the formation of hydroxyestrogens from 17beta-estradiol (E2), namely 2- and 4-hydroxy E2. Metabolizes testosterone and progesterone to B or D ring hydroxylated metabolites. May act as a major enzyme for all-trans retinoic acid biosynthesis in extrahepatic tissues. Catalyzes two successive oxidative transformation of all-trans retinol to all-trans retinal and then to the active form all-trans retinoic acid. Catalyzes the epoxidation of double bonds of certain PUFA. Converts arachidonic acid toward epoxyeicosatrienoic acid (EpETrE) regioisomers, 8,9-, 11,12-, and 14,15- EpETrE, that function as lipid mediators in the vascular system. Additionally, displays dehydratase activity toward oxygenated eicosanoids including hydroperoxyeicosatetraenoates (HpETEs). This activity is independent of cytochrome P450 reductase, NADPH, and O2. Also involved in the oxidative metabolism of xenobiotics, particularly converting polycyclic aromatic hydrocarbons and heterocyclic aryl amines procarcinogens to DNA-damaging products. Plays an important role in retinal vascular development. Under ambient/hyperoxic O2 conditions, promotes angiogenesis and capillary morphogenesis of retinal endothelial cells and pericytes, likely by metabolizing the oxygenated products symptomatic of oxidative stress. Also, contributes to oxidative homeostasis and ultrastructural organization and function of trabecular meshwork tissue through modulation of POSTN expression. The protein is Cytochrome P450 1B1 of Rattus norvegicus (Rat).